A 229-amino-acid chain; its full sequence is UPF0173 metal-dependent hydrolase SH1218 (229 aa).

It belongs to the UPF0173 family.

The chain is UPF0173 metal-dependent hydrolase SH1218 from Staphylococcus haemolyticus (strain JCSC1435).